The sequence spans 88 residues: uncharacterized protein (88 aa).

In terms of tissue distribution, expressed in a wide variety of tissues.

This is an uncharacterized protein from Homo sapiens (Human).